A 393-amino-acid polypeptide reads, in one-letter code: Formate-dependent phosphoribosylglycinamide formyltransferase (393 aa).

N(1)-(5-phospho-beta-D-ribosyl)glycinamide-binding positions include 22–23 (EL) and Glu82. ATP contacts are provided by residues Arg114, Lys155, 160 to 165 (SSGHGQ), 195 to 198 (EGFI), and Glu203. Positions 119–308 (RLAAEELGLK…QFALHARAIL (190 aa)) constitute an ATP-grasp domain. Glu267 and Glu279 together coordinate Mg(2+). N(1)-(5-phospho-beta-D-ribosyl)glycinamide contacts are provided by residues Asp286, Lys356, and 363–364 (RR).

Belongs to the PurK/PurT family. Homodimer.

It catalyses the reaction N(1)-(5-phospho-beta-D-ribosyl)glycinamide + formate + ATP = N(2)-formyl-N(1)-(5-phospho-beta-D-ribosyl)glycinamide + ADP + phosphate + H(+). The protein operates within purine metabolism; IMP biosynthesis via de novo pathway; N(2)-formyl-N(1)-(5-phospho-D-ribosyl)glycinamide from N(1)-(5-phospho-D-ribosyl)glycinamide (formate route): step 1/1. In terms of biological role, involved in the de novo purine biosynthesis. Catalyzes the transfer of formate to 5-phospho-ribosyl-glycinamide (GAR), producing 5-phospho-ribosyl-N-formylglycinamide (FGAR). Formate is provided by PurU via hydrolysis of 10-formyl-tetrahydrofolate. This Actinobacillus pleuropneumoniae serotype 5b (strain L20) protein is Formate-dependent phosphoribosylglycinamide formyltransferase.